A 127-amino-acid polypeptide reads, in one-letter code: Protein SPIRAL1-like 4 (127 aa).

The tract at residues 1–127 (MGKARGVNSG…FGSGPCGSDK (127 aa)) is disordered. The segment covering 39–48 (TTTTTTTTTT) has biased composition (low complexity). Residue S80 is modified to Phosphoserine. Polar residues predominate over residues 80–94 (SPNNYYRSDGQNCGN).

Belongs to the SPIRAL1 family. In terms of tissue distribution, ubiquitous.

Its function is as follows. Acts redundantly with SPR1 in maintaining the cortical microtubules organization essential for anisotropic cell growth. The polypeptide is Protein SPIRAL1-like 4 (SP1L4) (Arabidopsis thaliana (Mouse-ear cress)).